We begin with the raw amino-acid sequence, 485 residues long: Fumarate hydratase, mitochondrial (485 aa).

A mitochondrion-targeting transit peptide spans 1–19; it reads MLSASRKLNNQQFLKTIRN. Residues 118–120, 150–153, 160–162, and Thr-208 each bind substrate; these read SGT, HPND, and SSN. His-209 acts as the Proton donor/acceptor in catalysis. The active site involves Ser-339. Substrate contacts are provided by residues Ser-340 and 345–347; that span reads KVN.

The protein belongs to the class-II fumarase/aspartase family. Fumarase subfamily. In terms of assembly, homotetramer.

It localises to the mitochondrion. Its subcellular location is the cytoplasm. It carries out the reaction (S)-malate = fumarate + H2O. It participates in carbohydrate metabolism; tricarboxylic acid cycle; (S)-malate from fumarate: step 1/1. Catalyzes the reversible stereospecific interconversion of fumarate to L-malate. In terms of biological role, catalyzes the hydration of fumarate to L-malate in the tricarboxylic acid (TCA) cycle to facilitate a transition step in the production of energy in the form of NADH. The polypeptide is Fumarate hydratase, mitochondrial (Dictyostelium discoideum (Social amoeba)).